Here is a 435-residue protein sequence, read N- to C-terminus: Xylose isomerase (435 aa).

Residues H99 and D102 contribute to the active site. Residues E230, E266, H269, D294, D305, D307, and D337 each contribute to the Mg(2+) site.

This sequence belongs to the xylose isomerase family. Homotetramer. Mg(2+) is required as a cofactor.

It is found in the cytoplasm. It carries out the reaction alpha-D-xylose = alpha-D-xylulofuranose. The protein is Xylose isomerase (xylA) of Tetragenococcus halophilus (Pediococcus halophilus).